The sequence spans 261 residues: tRNA pseudouridine synthase A 2 (261 aa).

Asp-59 serves as the catalytic Nucleophile. Tyr-117 is a substrate binding site.

This sequence belongs to the tRNA pseudouridine synthase TruA family. As to quaternary structure, homodimer.

The catalysed reaction is uridine(38/39/40) in tRNA = pseudouridine(38/39/40) in tRNA. Formation of pseudouridine at positions 38, 39 and 40 in the anticodon stem and loop of transfer RNAs. This is tRNA pseudouridine synthase A 2 from Desulfotalea psychrophila (strain LSv54 / DSM 12343).